A 110-amino-acid polypeptide reads, in one-letter code: UPF0122 protein RBAM_015800 (110 aa).

Belongs to the UPF0122 family.

Might take part in the signal recognition particle (SRP) pathway. This is inferred from the conservation of its genetic proximity to ftsY/ffh. May be a regulatory protein. The polypeptide is UPF0122 protein RBAM_015800 (Bacillus velezensis (strain DSM 23117 / BGSC 10A6 / LMG 26770 / FZB42) (Bacillus amyloliquefaciens subsp. plantarum)).